The following is a 3902-amino-acid chain: Mediator of RNA polymerase II transcription subunit 12 (3902 aa).

10 disordered regions span residues 414-576 (ESLT…EELP), 619-674 (FEPF…NPKL), 694-940 (AFDP…LEAL), 977-1029 (VVEK…PEPP), 1812-1831 (TSHK…TETR), 2463-2675 (TVEP…NRKQ), 2719-2771 (AGAS…SSSM), 2876-3151 (RIME…PEMQ), 3195-3549 (LQAG…SSNQ), and 3563-3902 (AGLN…QQQY). Residues 420–430 (EPEEDPEEGPE) show a composition bias toward acidic residues. The segment covering 709 to 721 (PTPPEAPPPPPPV) has biased composition (pro residues). Basic and acidic residues-rich tracts occupy residues 740–802 (EDGK…EHLN), 912–928 (KAGD…KKPD), 977–1004 (VVEK…EKLP), and 1018–1027 (KTPEKPKTPE). The segment covering 1812-1824 (TSHKTKDVKRKSA) has biased composition (basic residues). Residues 2409 to 3902 (QTTRLDKVAK…MGQFPNQQQY (1494 aa)) are required for nuclear localization. The segment covering 2474 to 2547 (AAVKKPEEET…VTAKDTEKDT (74 aa)) has biased composition (basic and acidic residues). A coiled-coil region spans residues 2480–2526 (EEETAEKKKDEAKKADEKTTKADDEKKKDETADAKKDNEKQKEEKDK). Composition is skewed to low complexity over residues 2548–2566 (AAPT…AAPD), 2614–2632 (SRAN…SSTT), and 2734–2748 (PHPG…QHQG). Basic and acidic residues predominate over residues 2876–2979 (RIMEEQRILR…ERLERERVAR (104 aa)). 4 stretches are compositionally biased toward low complexity: residues 2980–3001 (EALA…QAQQ), 3010–3143 (QQQR…QRNP), 3196–3205 (QAGQAAGQQQ), and 3226–3236 (PQQQQQQPQQP). A compositionally biased stretch (polar residues) spans 3237–3248 (GTSQIPNTTPTR). Composition is skewed to low complexity over residues 3250 to 3275 (ANPM…GQPG), 3284 to 3295 (GQQQQNQFQRQG), and 3317 to 3389 (GQQQ…FGRQ). A compositionally biased stretch (polar residues) spans 3391–3409 (APNQENFQQQPGFNQNAAG). 3 stretches are compositionally biased toward low complexity: residues 3410 to 3446 (QNYQ…QQQN), 3454 to 3539 (QSQQ…QGNQ), and 3570 to 3619 (SSGN…RPGM). The span at 3620–3649 (GQQGMGQQGMGQQGGMGQSGRGQPGMGGQS) shows a compositional bias: gly residues. Low complexity-rich tracts occupy residues 3663–3700 (MGQP…QQQH), 3710–3742 (QQGR…QQAQ), and 3760–3830 (QQQQ…HRGQ). Residues 3831 to 3841 (GQQGHGMGGAG) show a composition bias toward gly residues. A compositionally biased stretch (low complexity) spans 3842–3888 (QQHQQVPQQQQNQYFQPQQQQDQRMQQQPGGQQQQQQGQSGQQQNNQ). The segment covering 3889 to 3902 (HYNNMGQFPNQQQY) has biased composition (polar residues).

This sequence belongs to the Mediator complex subunit 12 family. In terms of assembly, component of the Mediator complex.

It localises to the nucleus. Component of the Mediator complex, a coactivator involved in regulated gene transcription of nearly all RNA polymerase II-dependent genes. Mediator functions as a bridge to convey information from gene-specific regulatory proteins to the basal RNA polymerase II transcription machinery. Mediator is recruited to promoters by direct interactions with regulatory proteins and serves as a scaffold for the assembly of a functional preinitiation complex with RNA polymerase II and the general transcription factors. This Caenorhabditis briggsae protein is Mediator of RNA polymerase II transcription subunit 12 (dpy-22).